Here is a 421-residue protein sequence, read N- to C-terminus: Gamma-glutamyl phosphate reductase (421 aa).

The protein belongs to the gamma-glutamyl phosphate reductase family.

It is found in the cytoplasm. It catalyses the reaction L-glutamate 5-semialdehyde + phosphate + NADP(+) = L-glutamyl 5-phosphate + NADPH + H(+). It functions in the pathway amino-acid biosynthesis; L-proline biosynthesis; L-glutamate 5-semialdehyde from L-glutamate: step 2/2. Its function is as follows. Catalyzes the NADPH-dependent reduction of L-glutamate 5-phosphate into L-glutamate 5-semialdehyde and phosphate. The product spontaneously undergoes cyclization to form 1-pyrroline-5-carboxylate. This is Gamma-glutamyl phosphate reductase from Brucella melitensis biotype 1 (strain ATCC 23456 / CCUG 17765 / NCTC 10094 / 16M).